A 365-amino-acid chain; its full sequence is Chorismate synthase (365 aa).

Residues Arg48 and Arg54 each coordinate NADP(+). Residues 131–133, 243–244, Gly288, 303–307, and Arg329 contribute to the FMN site; these read RSS, NA, and KPTSS.

The protein belongs to the chorismate synthase family. As to quaternary structure, homotetramer. Requires FMNH2 as cofactor.

It catalyses the reaction 5-O-(1-carboxyvinyl)-3-phosphoshikimate = chorismate + phosphate. Its pathway is metabolic intermediate biosynthesis; chorismate biosynthesis; chorismate from D-erythrose 4-phosphate and phosphoenolpyruvate: step 7/7. Catalyzes the anti-1,4-elimination of the C-3 phosphate and the C-6 proR hydrogen from 5-enolpyruvylshikimate-3-phosphate (EPSP) to yield chorismate, which is the branch point compound that serves as the starting substrate for the three terminal pathways of aromatic amino acid biosynthesis. This reaction introduces a second double bond into the aromatic ring system. The chain is Chorismate synthase from Rhizobium etli (strain CIAT 652).